A 103-amino-acid chain; its full sequence is Small ribosomal subunit protein uS10 (103 aa).

This sequence belongs to the universal ribosomal protein uS10 family. Part of the 30S ribosomal subunit.

Its function is as follows. Involved in the binding of tRNA to the ribosomes. The chain is Small ribosomal subunit protein uS10 from Pelodictyon phaeoclathratiforme (strain DSM 5477 / BU-1).